The sequence spans 1034 residues: Glycine dehydrogenase (decarboxylating), mitochondrial (1034 aa).

The N-terminal 63 residues, 1–63 (MERARRLAML…LNGFGSQVRT (63 aa)), are a transit peptide targeting the mitochondrion. Lys-770 carries the post-translational modification N6-(pyridoxal phosphate)lysine.

This sequence belongs to the GcvP family. Homodimer. The glycine cleavage system is composed of four proteins: P, T, L and H. It depends on pyridoxal 5'-phosphate as a cofactor.

The protein localises to the mitochondrion. The enzyme catalyses N(6)-[(R)-lipoyl]-L-lysyl-[glycine-cleavage complex H protein] + glycine + H(+) = N(6)-[(R)-S(8)-aminomethyldihydrolipoyl]-L-lysyl-[glycine-cleavage complex H protein] + CO2. In terms of biological role, the glycine cleavage system catalyzes the degradation of glycine. The P protein binds the alpha-amino group of glycine through its pyridoxal phosphate cofactor; CO(2) is released and the remaining methylamine moiety is then transferred to the lipoamide cofactor of the H protein. This is Glycine dehydrogenase (decarboxylating), mitochondrial (GDCSP) from Flaveria anomala (Yellowtops).